A 401-amino-acid polypeptide reads, in one-letter code: Solute carrier family 22 member 17 (401 aa).

Helical transmembrane passes span 10–30, 35–55, 69–89, 100–120, 184–203, 218–238, 247–267, 277–297, 309–329, and 336–356; these read GIVL…AAAG, IMAL…GVYL, VALA…GLAL, MITA…FLES, NIWK…HAIR, FYLC…FLGV, GILL…LGLW, TFSV…TLLA, GLGL…AQRL, and FLQH…IMLL.

Belongs to the major facilitator (TC 2.A.1) superfamily. Organic cation transporter (TC 2.A.1.19) family. Widely expressed.

Its subcellular location is the cell membrane. The protein resides in the vacuole membrane. In terms of biological role, cell surface receptor for LCN2 (24p3) that plays a key role in iron homeostasis and transport. Able to bind iron-bound LCN2 (holo-24p3), followed by internalization of holo-24p3 and release of iron, thereby increasing intracellular iron concentration and leading to inhibition of apoptosis. Also binds iron-free LCN2 (apo-24p3), followed by internalization of apo-24p3 and its association with an intracellular siderophore, leading to iron chelation and iron transfer to the extracellular medium, thereby reducing intracellular iron concentration and resulting in apoptosis. The chain is Solute carrier family 22 member 17 (Slc22a17) from Mus musculus (Mouse).